A 389-amino-acid chain; its full sequence is MALGTTMTEAGEAALGRLRQWPGEHRVAVGLSGGVDSSLTAALLVEAGWEVEGLTLWLMSGKGACCAEGLVDAAGICEQLGIPHHVVDTRETFQKEIVQRLVDGYQDGITPLPCSQCNRSVKFGPMLEWAAQERNLPRIATGHYARIRHGGDCGRHQLLRGLDSRKDQSYFLYDLPQEALGRIVFPLGELTKADTRIEAGRHGLRTAEKPESQDLCLADHHGSMRAFLDTYLPPRQGEIVLKDGTVVGEHDGIEHFTIGQRKGLGVAWQEPLHVVKLDPAMNRVVVAPRAEAGRHEAVVGAINWVSIDPPLQAMNLEVQVRYRSAPVTARLTPLPATDDDHQRQRPHRCHLVFDEDQFSIAPGQAAVFYSDDTVLGGGLLQRDFDTNQE.

ATP-binding positions include Gly30–Ser37 and Leu56. Residue Cys117 is the Nucleophile of the active site. The cysteines at positions 117 and 216 are disulfide-linked. Gly142 is a binding site for ATP. The tract at residues Lys166–Gln168 is interaction with tRNA. Cys216 acts as the Cysteine persulfide intermediate in catalysis. An interaction with tRNA region spans residues Arg321–Tyr322.

This sequence belongs to the MnmA/TRMU family.

It localises to the cytoplasm. The catalysed reaction is S-sulfanyl-L-cysteinyl-[protein] + uridine(34) in tRNA + AH2 + ATP = 2-thiouridine(34) in tRNA + L-cysteinyl-[protein] + A + AMP + diphosphate + H(+). Its function is as follows. Catalyzes the 2-thiolation of uridine at the wobble position (U34) of tRNA, leading to the formation of s(2)U34. This is tRNA-specific 2-thiouridylase MnmA from Synechococcus sp. (strain CC9902).